The following is a 108-amino-acid chain: DNA-directed RNA polymerase III subunit RPC10 (108 aa).

Zn(2+) is bound by residues cysteine 5, cysteine 8, cysteine 25, cysteine 28, cysteine 69, and cysteine 72. A C4-type zinc finger spans residues 5-28; sequence CPGCGNGLIVEEGQRCHRFACNTC. The TFIIS-type zinc-finger motif lies at 65 to 107; that stretch reads TAEPCPKCEHPRAYFMQLQTRSADEPMTTFYKCCNAQCGHRWR. The Hairpin signature appears at 88-89; that stretch reads DE. Residues cysteine 98 and cysteine 102 each coordinate Zn(2+).

It belongs to the archaeal RpoM/eukaryotic RPA12/RPB9/RPC11 RNA polymerase family. As to quaternary structure, component of the RNA polymerase III complex consisting of 17 subunits: a ten-subunit horseshoe-shaped catalytic core composed of POLR3A/RPC1, POLR3B/RPC2, POLR1C/RPAC1, POLR1D/RPAC2, POLR3K/RPC10, POLR2E/RPABC1, POLR2F/RPABC2, POLR2H/RPABC3, POLR2K/RPABC4 and POLR2L/RPABC5; a mobile stalk composed of two subunits POLR3H/RPC8 and CRCP/RPC9, protruding from the core and functioning primarily in transcription initiation; and additional subunits homologous to general transcription factors of the RNA polymerase II machinery, POLR3C/RPC3-POLR3F/RPC6-POLR3G/RPC7 heterotrimer required for transcription initiation and POLR3D/RPC4-POLR3E/RPC5 heterodimer involved in both transcription initiation and termination.

It is found in the nucleus. Functionally, core component of RNA polymerase III (Pol III) which synthesizes small non-coding RNAs using the four ribonucleoside triphosphates as substrates. Can mediate Pol I proofreading of the nascent RNA transcript. Anchors into the Pol III active site to constantly monitor transcription fidelity, cleaves mis-incorporated 5'-ribonucleotides and restarts the transcription process. Once Pol III reaches the poly(dT) termination signal, can induce Pol III clamp opening and transcription termination. Pol III plays an important role in sensing and limiting infection by intracellular bacteria and DNA viruses. Acts as a nuclear and cytosolic DNA sensor involved in innate immune response. Can sense non-self dsDNA that serves as template for transcription into dsRNA. The non-self RNA polymerase III transcripts, such as Epstein-Barr virus-encoded RNAs (EBERs) induce type I interferon and NF-kappa-B through the RIG-I pathway. This chain is DNA-directed RNA polymerase III subunit RPC10, found in Mus musculus (Mouse).